We begin with the raw amino-acid sequence, 60 residues long: UPF0434 protein HCH_02705 (60 aa).

It belongs to the UPF0434 family.

The chain is UPF0434 protein HCH_02705 from Hahella chejuensis (strain KCTC 2396).